Here is a 422-residue protein sequence, read N- to C-terminus: Enolase (422 aa).

(2R)-2-phosphoglycerate is bound at residue Gln-162. Glu-204 functions as the Proton donor in the catalytic mechanism. Residues Asp-241, Glu-284, and Asp-311 each coordinate Mg(2+). 4 residues coordinate (2R)-2-phosphoglycerate: Lys-336, Arg-365, Ser-366, and Lys-387. Lys-336 acts as the Proton acceptor in catalysis.

This sequence belongs to the enolase family. Requires Mg(2+) as cofactor.

The protein resides in the cytoplasm. The protein localises to the secreted. It localises to the cell surface. The catalysed reaction is (2R)-2-phosphoglycerate = phosphoenolpyruvate + H2O. It functions in the pathway carbohydrate degradation; glycolysis; pyruvate from D-glyceraldehyde 3-phosphate: step 4/5. In terms of biological role, catalyzes the reversible conversion of 2-phosphoglycerate (2-PG) into phosphoenolpyruvate (PEP). It is essential for the degradation of carbohydrates via glycolysis. The chain is Enolase from Bartonella tribocorum (strain CIP 105476 / IBS 506).